Consider the following 374-residue polypeptide: Aclacinomycin 10-hydroxylase RdmB (374 aa).

Tyrosine 171, glycine 190, glutamate 213, aspartate 240, phenylalanine 241, and serine 255 together coordinate S-adenosyl-L-methionine.

It belongs to the class I-like SAM-binding methyltransferase superfamily. Cation-independent O-methyltransferase family. In terms of assembly, homodimer. Homotetramer in solution. Tetramers might not be very stable in solution.

It carries out the reaction 15-demethylaclacinomycin T + AH2 + O2 = 10-decarboxymethylaclacinomycin T + A + CO2 + H2O. The enzyme catalyses 10-carboxy-13-deoxycarminomycin + AH2 + O2 + H(+) = 10-hydroxy-13-deoxycarminomycin + A + CO2 + H2O. The catalysed reaction is 10-hydroxy-13-deoxycarminomycin + S-adenosyl-L-methionine = 10-hydroxy-13-deoxydaunorubicin + S-adenosyl-L-homocysteine + H(+). It participates in antibiotic biosynthesis; rhodomycin biosynthesis. It functions in the pathway antibiotic biosynthesis; aclacinomycin biosynthesis. With respect to regulation, the hydroxylation reaction requires S-adenosyl-L-methionine (SAM) as a cofactor. S-adenosine-L-homocysteine and sinefungin (a SAM analog) can also support the decarboxylative hydroxylation activity with 10-carboxy-13-deoxycarminomycin as substrate. SAM and its analogs are considered an essential structural ligand to maintain ternary structural integrity and the proper binding mode and orientation of electron-rich substrates during decarboxylative hydroxylation of C-10 by RdmB. Functionally, involved in the biosynthesis of anthracyclines, an important group of aromatic polyketide antibiotics used in cancer chemotherapy. Acts as a 10-hydroxylase to catalyze a decarboxylative hydroxylation reaction on anthracyclines. During biosynthesis of rhodomycin, it catalyzes the removal of the carboxylic group at the C-10 position of 15-demethoxy-epsilon-rhodomycin coupled to hydroxylation at the same C-10 position to yield beta-rhodomycin. In vitro, can also catalyze the removal of the carboxylic group at the C-10 position of 15-demethoxyaclacinomycin T coupled to hydroxylation at the same C-10 position to yield 10-decarboxymethylaclacinomycin T. It can also use 10-carboxy-13-deoxycarminomycin, an analog of 15-demethoxy-epsilon-rhodomycin, to yield 10-hydroxy-13-deoxycarminomycin. Its function is as follows. In addition to its hydroxylation activity, it can act in vitro as a S-adenosyl-L-methionine-dependent O-methyltransferase and catalyze the 4-O-methylation of 10-hydroxy-13-deoxycarminomycin to 10-hydroxy-13-deoxydaunorubicin. The triglycosyl group of anthracyclines prevents the methylation reaction. This is Aclacinomycin 10-hydroxylase RdmB from Streptomyces purpurascens.